A 377-amino-acid polypeptide reads, in one-letter code: Succinyl-diaminopimelate desuccinylase (377 aa).

Residue histidine 68 coordinates Zn(2+). Aspartate 70 is an active-site residue. Residue aspartate 101 coordinates Zn(2+). Glutamate 135 functions as the Proton acceptor in the catalytic mechanism. Zn(2+) contacts are provided by glutamate 136, glutamate 164, and histidine 350.

The protein belongs to the peptidase M20A family. DapE subfamily. As to quaternary structure, homodimer. Zn(2+) is required as a cofactor. The cofactor is Co(2+).

The catalysed reaction is N-succinyl-(2S,6S)-2,6-diaminopimelate + H2O = (2S,6S)-2,6-diaminopimelate + succinate. Its pathway is amino-acid biosynthesis; L-lysine biosynthesis via DAP pathway; LL-2,6-diaminopimelate from (S)-tetrahydrodipicolinate (succinylase route): step 3/3. Functionally, catalyzes the hydrolysis of N-succinyl-L,L-diaminopimelic acid (SDAP), forming succinate and LL-2,6-diaminopimelate (DAP), an intermediate involved in the bacterial biosynthesis of lysine and meso-diaminopimelic acid, an essential component of bacterial cell walls. The polypeptide is Succinyl-diaminopimelate desuccinylase (Vibrio cholerae serotype O1 (strain ATCC 39541 / Classical Ogawa 395 / O395)).